Consider the following 357-residue polypeptide: MSLTRLLIRDFRNIETADLALSPGFNFLVGANGSGKTSVLEAIYTLGHGRAFRSLQIGRVIRHEQEAFVLHGRLQGEERETAIGLTKDKQGDSKVRIDGTDGHKVAELAHLMPMQLITPEGFTLLNGGPKYRRAFLDWGCFHNEPGFFTAWSNLKRLLKQRNAALRQVTRYEQLRPWDKELIPLAEQISTWRAEYSAGIAADMADTCKQFLPEFSLTFSFQRGWEKETEYAEVLERNFERDRQLTYTAHGPHKADLRIRADGAPVEDTLSRGQLKLLMCALRLAQGEFLTRESGRRCLYLIDDFASELDDERRGLLASRLKATQSQVFVSAISAEHVIDMSDENSKMFTVEKGKITD.

30–37 (GANGSGKT) is a binding site for ATP.

The protein belongs to the RecF family.

It is found in the cytoplasm. Functionally, the RecF protein is involved in DNA metabolism; it is required for DNA replication and normal SOS inducibility. RecF binds preferentially to single-stranded, linear DNA. It also seems to bind ATP. This Escherichia coli O139:H28 (strain E24377A / ETEC) protein is DNA replication and repair protein RecF.